The sequence spans 360 residues: F-box protein SKP2A (360 aa).

Residues 25–71 (IKEWKDIPVELLMRILSLVDDRNVIVASGVCTGWRDAISFGLTRLRL) form the F-box domain. (indol-3-yl)acetate-binding positions include 127–128 (SL), 149–152 (NLSG), 175–178 (NLCG), and Asn-202.

Part of a SCF (ASK-cullin-F-box) protein ligase complex. Interacts with CUL1 (RUB1-modified and non-modified isoforms), SKP1A, SKP1B and ASK18. Recruit DPB and phosphorylated E2FC. Interacts with auxin. Auxin controls the interaction with DPB. Polyubiquitinated and subsequently targeted to proteasome. Auxin promotes this ubiquitination-mediated degradation. Expressed in embryo, seedlings, hypocotyl, roots, leaves and flowers.

Its subcellular location is the nucleus. Its pathway is protein modification; protein ubiquitination. Functionally, component of SCF(SKP2A) E3 ubiquitin ligase complexes, which mediate the ubiquitination and subsequent proteasomal degradation of target proteins (including cell cycle repressors). Acts as an auxin receptor; one active auxin is indole-3-acetate. Regulates the stability of the transcription factors E2FC and DPB, repressors of cell proliferation. Confers increase tolerance to osmotic stress by promoting cell division, especially in meristems. Promotes the formation of lateral root primordia. In Arabidopsis thaliana (Mouse-ear cress), this protein is F-box protein SKP2A (SKP2A).